We begin with the raw amino-acid sequence, 167 residues long: Leptin (167 aa).

The N-terminal stretch at 1 to 21 (MHWGTLCGFLWLWPYLFYVQA) is a signal peptide. Cysteine 117 and cysteine 167 are disulfide-bonded.

This sequence belongs to the leptin family. As to quaternary structure, interacts with SIGLEC6. In terms of tissue distribution, adipose tissue is the main source of leptin. It is also produced by other peripheral tissues such as the skeletal muscle. Expressed by intercalated and striated tracts of submandibular and parotid salivary gland intralobular ducts. Detected by fundic epithelium of the gastric mucosa. Secreted into blood and gastric juice.

Its subcellular location is the secreted. Key player in the regulation of energy balance and body weight control. Once released into the circulation, has central and peripheral effects by binding LEPR, found in many tissues, which results in the activation of several major signaling pathways. In the hypothalamus, acts as an appetite-regulating factor that induces a decrease in food intake and an increase in energy consumption by inducing anorexinogenic factors and suppressing orexigenic neuropeptides, also regulates bone mass and secretion of hypothalamo-pituitary-adrenal hormones. In the periphery, increases basal metabolism, influences reproductive function, regulates pancreatic beta-cell function and insulin secretion, is pro-angiogenic for endothelial cell and affects innate and adaptive immunity. In the arcuate nucleus of the hypothalamus, activates by depolarization POMC neurons inducing FOS and SOCS3 expression to release anorexigenic peptides and inhibits by hyperpolarization NPY neurons inducing SOCS3 with a consequent reduction on release of orexigenic peptides. In addition to its known satiety inducing effect, has a modulatory role in nutrient absorption. In the intestine, reduces glucose absorption by enterocytes by activating PKC and leading to a sequential activation of p38, PI3K and ERK signaling pathways which exerts an inhibitory effect on glucose absorption. Acts as a growth factor on certain tissues, through the activation of different signaling pathways increases expression of genes involved in cell cycle regulation such as CCND1, via JAK2-STAT3 pathway, or VEGFA, via MAPK1/3 and PI3K-AKT1 pathways. May also play an apoptotic role via JAK2-STAT3 pathway and up-regulation of BIRC5 expression. Pro-angiogenic, has mitogenic activity on vascular endothelial cells and plays a role in matrix remodeling by regulating the expression of matrix metalloproteinases (MMPs) and tissue inhibitors of metalloproteinases (TIMPs). In innate immunity, modulates the activity and function of neutrophils by increasing chemotaxis and the secretion of oxygen radicals. Increases phagocytosis by macrophages and enhances secretion of pro-inflammatory mediators. Increases cytotoxic ability of NK cells. Plays a pro-inflammatory role, in synergy with IL1B, by inducing NOS2 which promotes the production of IL6, IL8 and Prostaglandin E2, through a signaling pathway that involves JAK2, PI3K, MAP2K1/MEK1 and MAPK14/p38. In adaptive immunity, promotes the switch of memory T-cells towards T helper-1 cell immune responses. Increases CD4(+)CD25(-) T-cell proliferation and reduces autophagy during TCR (T-cell receptor) stimulation, through MTOR signaling pathway activation and BCL2 up-regulation. The sequence is that of Leptin from Homo sapiens (Human).